The sequence spans 441 residues: Endothelin receptor type B (441 aa).

The signal sequence occupies residues 1-26 (MQPPPSLCGLALLALVLACGMAEVWG). The Extracellular segment spans residues 27–100 (EEREMPSAPA…RPTEIKDTFK (74 aa)). The tract at residues 30-90 (EMPSAPATPP…APRRTPPPCQ (61 aa)) is disordered. The segment covering 47-65 (LTPSTKTSWPRDSNASLPR) has biased composition (polar residues). Residue N60 is glycosylated (N-linked (GlcNAc...) asparagine). A helical transmembrane segment spans residues 101–125 (YINTVVSCLVFVLGIIGNSTLLRII). The Cytoplasmic segment spans residues 126–136 (YKNKCMRNGPN). Residues 137-162 (ILIASLALGDLLHIIIDIPINVYKLL) traverse the membrane as a helical segment. Residues 163–174 (AEDWPFGAEMCK) are Extracellular-facing. The cysteines at positions 173 and 254 are disulfide-linked. The chain crosses the membrane as a helical span at residues 175–196 (LVPFIQKASVGITVLSLCALSI). Residues 197-217 (DRYRAVASWSRIKGIGVPKWT) are Cytoplasmic-facing. Residues 218–242 (AVEIVLIWVVSVILAVPEAIGFNLV) form a helical membrane-spanning segment. The Extracellular portion of the chain corresponds to 243–270 (TIDYKGSYLRICLLNPTQKTAFMQFYKT). The chain crosses the membrane as a helical span at residues 271-295 (AKDWWLFSFYFCLPLAITAFFYTLM). The Cytoplasmic segment spans residues 296-323 (TCEMLRKKSGMQIALNDHLKQRREVAKT). S304 carries the phosphoserine modification. A helical transmembrane segment spans residues 324-349 (VFCLVLVFGLCWLALHLSRILKLTLY). The Extracellular segment spans residues 350-361 (DQNDPNRCELLS). The chain crosses the membrane as a helical span at residues 362–388 (FLLVLDYIGINMASLNSCINPIALYLV). Residues 389–441 (SKRFKNCFKSCLCCWCQSFEEKQSLEEKQSCLKFKANDHGYDNFRSSNKYSSS) are Cytoplasmic-facing. Residues C402 and C404 are each lipidated (S-palmitoyl cysteine). Position 418 is a phosphoserine (S418). Y438 carries the phosphotyrosine modification. S439, S440, and S441 each carry phosphoserine.

This sequence belongs to the G-protein coupled receptor 1 family. Endothelin receptor subfamily. EDNRB sub-subfamily.

It localises to the cell membrane. In terms of biological role, non-specific receptor for endothelin 1, 2, and 3. Mediates its action by association with G proteins that activate a phosphatidylinositol-calcium second messenger system. The polypeptide is Endothelin receptor type B (EDNRB) (Oryctolagus cuniculus (Rabbit)).